We begin with the raw amino-acid sequence, 397 residues long: Cell division protein DivIB (397 aa).

Topologically, residues 1–138 (MTTKDKGDQK…RIERIHLYRA (138 aa)) are cytoplasmic. A compositionally biased stretch (basic and acidic residues) spans 24–37 (QEYLEKKSQEKASE). Residues 24-115 (QEYLEKKSQE…DRTEKFIGQA (92 aa)) are disordered. Over residues 74–103 (ASDDDETNESEESEDVEEPEEENIEESSDV) the composition is skewed to acidic residues. A helical transmembrane segment spans residues 139 to 159 (LPVLVISSLLILLSLYFITPL). In terms of domain architecture, POTRA spans 160-231 (GSLKNLVVTG…ITFKIQVTEY (72 aa)). Residues 160 to 397 (GSLKNLVVTG…PSDVTDETNN (238 aa)) lie on the Extracellular side of the membrane. The tract at residues 360–397 (LVQKEEQDQEQEKEESSEETVPGETEAAPSDVTDETNN) is disordered. The segment covering 366–377 (QDQEQEKEESSE) has biased composition (acidic residues).

Belongs to the FtsQ/DivIB family. DivIB subfamily.

The protein localises to the cell membrane. In terms of biological role, cell division protein that may be involved in stabilizing or promoting the assembly of the division complex. The polypeptide is Cell division protein DivIB (Streptococcus gordonii (strain Challis / ATCC 35105 / BCRC 15272 / CH1 / DL1 / V288)).